A 394-amino-acid polypeptide reads, in one-letter code: Alcohol dehydrogenase-like 3 (394 aa).

Positions 48, 50, 71, 101, 104, 107, 115, and 188 each coordinate Zn(2+). Residues Thr-50 and His-71 each coordinate an alcohol. Thr-50 contributes to the NAD(+) binding site. NAD(+)-binding positions include Gly-213 to Gly-218, Asp-237, Lys-242, Thr-283, Val-306, Val-306 to Ile-308, Phe-333, and Arg-383.

The protein belongs to the zinc-containing alcohol dehydrogenase family. Class-III subfamily. Homodimer. It depends on Zn(2+) as a cofactor.

It is found in the cytoplasm. It catalyses the reaction a primary alcohol + NAD(+) = an aldehyde + NADH + H(+). It carries out the reaction a secondary alcohol + NAD(+) = a ketone + NADH + H(+). In Arabidopsis thaliana (Mouse-ear cress), this protein is Alcohol dehydrogenase-like 3.